Here is a 71-residue protein sequence, read N- to C-terminus: DNA-directed RNA polymerase subunit Rpo10 (71 aa).

Zn(2+)-binding residues include Cys6, Cys9, Cys52, and Cys53.

The protein belongs to the archaeal Rpo10/eukaryotic RPB10 RNA polymerase subunit family. In terms of assembly, part of the RNA polymerase complex. Zn(2+) serves as cofactor.

Its subcellular location is the cytoplasm. The catalysed reaction is RNA(n) + a ribonucleoside 5'-triphosphate = RNA(n+1) + diphosphate. Functionally, DNA-dependent RNA polymerase (RNAP) catalyzes the transcription of DNA into RNA using the four ribonucleoside triphosphates as substrates. This chain is DNA-directed RNA polymerase subunit Rpo10, found in Methanocella arvoryzae (strain DSM 22066 / NBRC 105507 / MRE50).